The sequence spans 1119 residues: MNFSNILSNFFGNKSQRDLNEISPFVQKTLTIYSSVENLSNDELRGRTRELMILLQKEIEMEKNKIDELKILVESLELEDRETVWNEIDEIEKDIIEKQERILDKILPEVFAIVKDTARRFAENETIEVTATDFDRQLAVFYDFVSIQNDKAIYQNHWFAGGNEIIWNMIHYNVQLFGGIVLHNCNPKKYIKDIEGHNFSKKIKGYIAEMATGEGKTLAATLPVFLNAMTHNGVHVVTINDYLSKRDSEWMGPLYMFHGLSVDCIDKHRPNSNERRKAYEADITFGTNSEFGFDYLRDNMAVNPQDLVQRKHNYAIIDEVDSVLIDDARTPLIISGPVAKEDDQLYVLYRSRVENLVNVQKKLTNNLLIEAKKLMALEDPKQHEEGLKLLFRSYKGMPKNKALIKYLSEPGIKMSMLKTEEFYMQQQNREMYIITDELYFVIDEKNRSVELTDRGIDILTGNSDDPEFFVLPDLGTKFAEIENELITKEEKQLKKDELMQSYAAKSERVHTINQLLKAYCLFEKDDAYVVLDNRVMIVDEQTGRIMEGRRYSDGLHQAIEAKEHVKIEAATQTFATITLQNYFRMYRKLAGMTGTAETEAGEFWDIYKLDVVVIPTNQLVIRNDKDDRLYKTAREKYAAIINEIITLREHGRPVLVGTTSVEISELLSRMLNMRKIHHNVLNAKLHQKEAEIVAQAGQTGTVTIATNMAGRGTDIKLSTKARDAGGLAIIGTERHDSRRIDRQLRGRSGRQGDPGSSVFFISLEDDLMRLFASERIAKMMDKMGFKEGEVLEAKMLNNAVERAQKKVEENNFGIRKRLLEYDDVMNSQREVIYKRRHHALIGERIGLDIINMIYDVVNSIVEQYSNFNDYKGLKSELYKTLAIEPPISEEEFKNMKTTHLTEVIFNTSIVNFKWKNEQIVQIVQPRIERAYKEVGNKYQNIIVPITDGRKIYNVSYHLKTVHDTKSREIIKSFEKAVLLSSIDEAWREHLREMDELHNSVQNASYENKDPLLIYKLESFNLFKNMIDTMNKRVISILMRGQIYIKNQEVREATPEKKTNYNHYKVRKDELIESGRIQGRTAKRDTRILQKIEPIRVEKTVRRNDPCPCGSGKKYKNCCF.

ATP contacts are provided by residues Gln-175, 213–217 (GEGKT), and Asp-714. Positions 1106, 1108, 1117, and 1118 each coordinate Zn(2+).

The protein belongs to the SecA family. As to quaternary structure, monomer and homodimer. Part of the essential Sec protein translocation apparatus which comprises SecA, SecYEG and auxiliary proteins SecDF. Other proteins may also be involved. Zn(2+) is required as a cofactor.

It is found in the cell inner membrane. Its subcellular location is the cytoplasm. It catalyses the reaction ATP + H2O + cellular proteinSide 1 = ADP + phosphate + cellular proteinSide 2.. Its function is as follows. Part of the Sec protein translocase complex. Interacts with the SecYEG preprotein conducting channel. Has a central role in coupling the hydrolysis of ATP to the transfer of proteins into and across the cell membrane, serving as an ATP-driven molecular motor driving the stepwise translocation of polypeptide chains across the membrane. The polypeptide is Protein translocase subunit SecA (Azobacteroides pseudotrichonymphae genomovar. CFP2).